The following is a 179-amino-acid chain: Transcription factor 21 (179 aa).

Residues 23-87 (IKLDPNKEFG…QVQRNAANAR (65 aa)) are disordered. Residues 34–46 (SNDSNEESSTCDN) are compositionally biased toward polar residues. Basic residues predominate over residues 50–64 (KKGRGTSGKRRKAPS). Over residues 70-80 (GNINQEGKQVQ) the composition is skewed to polar residues. The 53-residue stretch at 79–131 (VQRNAANARERARMRVLSKAFSRLKTTLPWVPPDTKLSKLDTLRLASSYIAHL) folds into the bHLH domain.

Efficient DNA binding requires dimerization with another bHLH protein.

It localises to the nucleus. In terms of biological role, involved in epithelial-mesenchymal interactions in kidney and lung morphogenesis that include epithelial differentiation and branching morphogenesis. In Xenopus tropicalis (Western clawed frog), this protein is Transcription factor 21 (tcf21).